A 542-amino-acid chain; its full sequence is Coiled-coil domain-containing protein 60 (542 aa).

The stretch at 70–97 forms a coiled coil; the sequence is TMLQEETAFKKHQQHLKKLQEEELNKFQ. Disordered regions lie at residues 228 to 284 and 334 to 358; these read ATRK…EEEV and QTTHKSSERSSTTSGESHIQVTQKK. Low complexity-rich tracts occupy residues 245 to 261 and 342 to 351; these read SGGSSPQSSMMSVNPSS and RSSTTSGESH.

The protein is Coiled-coil domain-containing protein 60 (Ccdc60) of Rattus norvegicus (Rat).